The following is a 189-amino-acid chain: Adenylate kinase (189 aa).

10–15 (AAGKGT) provides a ligand contact to ATP. Positions 30-59 (STGDMLRAAIASGSELGQKVKGVLDRGELV) are NMP. AMP is bound by residues threonine 31, arginine 36, 57 to 59 (ELV), 85 to 88 (GFPR), and glutamine 92. The LID stretch occupies residues 126–136 (KRFAEQGRPDD). Position 127 (arginine 127) interacts with ATP. AMP contacts are provided by arginine 133 and arginine 144. Alanine 172 lines the ATP pocket.

This sequence belongs to the adenylate kinase family. In terms of assembly, monomer.

It localises to the cytoplasm. It carries out the reaction AMP + ATP = 2 ADP. It participates in purine metabolism; AMP biosynthesis via salvage pathway; AMP from ADP: step 1/1. Its function is as follows. Catalyzes the reversible transfer of the terminal phosphate group between ATP and AMP. Plays an important role in cellular energy homeostasis and in adenine nucleotide metabolism. The chain is Adenylate kinase from Caulobacter sp. (strain K31).